The primary structure comprises 400 residues: Acyl-CoA dehydrogenase FadE26 (400 aa).

Residues 127–130, threonine 136, and serine 162 contribute to the FAD site; that span reads IGYS. Glutamate 247 serves as the catalytic Proton acceptor. FAD is bound at residue 380-382; it reads TNE.

This sequence belongs to the acyl-CoA dehydrogenase family. Heterotetramer (dimer of heterodimers) composed of FadE26 and FadE27. It depends on FAD as a cofactor.

The catalysed reaction is (25S)-3-oxocholest-4-en-26-oyl-CoA + A = 3-oxo-cholest-4,24-dien-26-oyl-CoA + AH2. The protein operates within steroid metabolism; cholesterol degradation. With respect to regulation, uncompetitively inhibited by high concentration of 3-OCS-CoA. In terms of biological role, involved in the first cycle of side chain dehydrogenation in the beta-oxidation of cholesterol catabolism. It contributes partly to the virulence by increasing the efficiency of beta-oxidation. Catalyzes the dehydrogenation of acyl-CoA ester side chains of (25S)-3-oxo-cholest-4-en-26-oyl-CoA (3-OCS-CoA) to yield (24E)-3-oxo-cholest-4,24-dien-26-oyl-CoA. Also able to dehydrogenate steroyl-CoA such as 3-oxo-chol-4-en-24-oyl-CoA (3-OCO-CoA) as well as 3-oxo-4-pregnene-20-carboxyl-CoA (3-OPC-CoA). It dehydrogenates only (25S)-OCS-CoA diastereomer. This Mycobacterium tuberculosis (strain ATCC 25618 / H37Rv) protein is Acyl-CoA dehydrogenase FadE26 (fadE26).